We begin with the raw amino-acid sequence, 181 residues long: Malignant T-cell-amplified sequence 2 (181 aa).

The PUA domain maps to 92–171; it reads LPHQQVDKGA…IGIENIHYLN (80 aa).

The protein belongs to the MCTS1 family.

The protein resides in the cytoplasm. This chain is Malignant T-cell-amplified sequence 2, found in Homo sapiens (Human).